The chain runs to 95 residues: Aspartyl/glutamyl-tRNA(Asn/Gln) amidotransferase subunit C (95 aa).

The protein belongs to the GatC family. As to quaternary structure, heterotrimer of A, B and C subunits.

The catalysed reaction is L-glutamyl-tRNA(Gln) + L-glutamine + ATP + H2O = L-glutaminyl-tRNA(Gln) + L-glutamate + ADP + phosphate + H(+). The enzyme catalyses L-aspartyl-tRNA(Asn) + L-glutamine + ATP + H2O = L-asparaginyl-tRNA(Asn) + L-glutamate + ADP + phosphate + 2 H(+). Its function is as follows. Allows the formation of correctly charged Asn-tRNA(Asn) or Gln-tRNA(Gln) through the transamidation of misacylated Asp-tRNA(Asn) or Glu-tRNA(Gln) in organisms which lack either or both of asparaginyl-tRNA or glutaminyl-tRNA synthetases. The reaction takes place in the presence of glutamine and ATP through an activated phospho-Asp-tRNA(Asn) or phospho-Glu-tRNA(Gln). This Ectopseudomonas mendocina (strain ymp) (Pseudomonas mendocina) protein is Aspartyl/glutamyl-tRNA(Asn/Gln) amidotransferase subunit C.